The sequence spans 460 residues: Cysteine--tRNA ligase (460 aa).

C28 contacts Zn(2+). The 'HIGH' region motif lies at 30–40 (MTVYDYCHLGH). Zn(2+) contacts are provided by C209, H234, and E238. A 'KMSKS' region motif is present at residues 266 to 270 (KMSKS). An ATP-binding site is contributed by K269.

The protein belongs to the class-I aminoacyl-tRNA synthetase family. Monomer. Zn(2+) serves as cofactor.

It is found in the cytoplasm. The catalysed reaction is tRNA(Cys) + L-cysteine + ATP = L-cysteinyl-tRNA(Cys) + AMP + diphosphate. This is Cysteine--tRNA ligase from Pseudomonas syringae pv. syringae (strain B728a).